We begin with the raw amino-acid sequence, 308 residues long: Transcription factor zip-2 (308 aa).

Over residues 217–229 (QSSSSSTVETTIT) the composition is skewed to polar residues. The segment at 217–277 (QSSSSSTVET…RESKEERERL (61 aa)) is disordered. Residues 242–305 (SSDYRHKRDK…EDYKRLVMMF (64 aa)) enclose the bZIP domain. Residues 246-276 (RHKRDKNNLASQKSRQKRQAKIRESKEERER) are basic motif. Positions 266–277 (KIRESKEERERL) are enriched in basic and acidic residues. The leucine-zipper stretch occupies residues 277 to 291 (LEKRKVQLQAMVLTL).

Belongs to the bZIP family. C/EBP subfamily. As to expression, expressed in the pharynx and throughout the intestine.

It localises to the nucleus. Transcription factor that binds to the promoter and the enhancer regions of target genes. May act together with the bZIP transcription factor, cebp-2. Involved in responding to mitochondrial damage. Plays a role in the delay of age-associated mitochondrial fragmentation and muscle decline. Has a protective role in response to infection by the Gram-negative bacterium P.aeruginosa. Required to prevent P.aeruginosa ToxA-mediated lethality. Required for the activation of several infection response genes including irg-1 and irg-2 following P.aeruginosa infection; target gene activation may involve effects of the bacterial toxin, ToxA, and perhaps other toxins. This Caenorhabditis elegans protein is Transcription factor zip-2.